The following is a 348-amino-acid chain: D-alanine--D-alanine ligase (348 aa).

Residues K132–V334 form the ATP-grasp domain. L162–E217 lines the ATP pocket. Residues D288, E301, and N303 each coordinate Mg(2+).

It belongs to the D-alanine--D-alanine ligase family. Mg(2+) serves as cofactor. It depends on Mn(2+) as a cofactor.

Its subcellular location is the cytoplasm. It carries out the reaction 2 D-alanine + ATP = D-alanyl-D-alanine + ADP + phosphate + H(+). The protein operates within cell wall biogenesis; peptidoglycan biosynthesis. In terms of biological role, cell wall formation. This chain is D-alanine--D-alanine ligase, found in Streptococcus thermophilus (strain CNRZ 1066).